The following is a 535-amino-acid chain: Sodium/hydrogen exchanger 1 (535 aa).

The Cytoplasmic portion of the chain corresponds to 1–21 (MGMEVAAARLGALYTTSDYAS). The chain crosses the membrane as a helical span at residues 22 to 42 (VVSINLFVALLCACIVLGHLL). Residues 43–46 (EENR) lie on the Vacuolar side of the membrane. Residues 47-67 (WVNESITALIIGLCTGVVILL) traverse the membrane as a helical segment. Residues 68-75 (MTKGKSSH) are Cytoplasmic-facing. Residues 76-96 (LFVFSEDLFFIYLLPPIIFNA) traverse the membrane as a helical segment. The Vacuolar segment spans residues 97–114 (GFQVKKKQFFRNFMTITL). Residues 115–135 (FGAVGTMISFFTISIAAIAIF) traverse the membrane as a helical segment. Topologically, residues 136–137 (SR) are cytoplasmic. A helical membrane pass occupies residues 138–158 (MNIGTLDVGDFLAIGAIFSAT). Residues 159–173 (DSVCTLQVLNQDETP) lie on the Vacuolar side of the membrane. Residues 174-194 (FLYSLVFGEGVVNDATSIVLF) form a helical membrane-spanning segment. Residues 195–218 (NALQNFDLVHIDAAVVLKFLGNFF) are Cytoplasmic-facing. Residues 219-239 (YLFLSSTFLGVFAGLLSAYII) form a helical membrane-spanning segment. The Vacuolar portion of the chain corresponds to 240-264 (KKLYIGRHSTDREVALMMLMAYLSY). Residues 265–285 (MLAELLDLSGILTVFFCGIVM) traverse the membrane as a helical segment. Over 286-304 (SHYTWHNVTESSRVTTKHA) the chain is Cytoplasmic. The helical transmembrane segment at 305–325 (FATLSFIAETFLFLYVGMDAL) threads the bilayer. Residues 326-344 (DIEKWEFASDRPGKSIGIS) are Vacuolar-facing. A helical membrane pass occupies residues 345 to 365 (SILLGLVLIGRAAFVFPLSFL). At 366–381 (SNLTKKAPNEKITWRQ) the chain is on the cytoplasmic side. The helical transmembrane segment at 382-402 (QVVIWWAGLMRGAVSIALAYN) threads the bilayer. Residues 403–415 (KFTRSGHTQLHGN) are Vacuolar-facing. A helical transmembrane segment spans residues 416–436 (AIMITSTITVVLFSTMVFGMM). Residues 437 to 535 (TKPLIRLLLP…SPTEQSHGGR (99 aa)) lie on the Cytoplasmic side of the membrane. The tract at residues 452 to 478 (VTSEPSSPKSLHSPLLTSMQGSDLEST) is disordered. A compositionally biased stretch (low complexity) spans 454–469 (SEPSSPKSLHSPLLTS).

It belongs to the monovalent cation:proton antiporter 1 (CPA1) transporter (TC 2.A.36) family.

The protein localises to the vacuole membrane. It carries out the reaction Na(+)(in) + H(+)(out) = Na(+)(out) + H(+)(in). It catalyses the reaction K(+)(in) + H(+)(out) = K(+)(out) + H(+)(in). Its function is as follows. Vacuolar antiporter that acts in low affinity electroneutral exchange of protons H(+) for cations such as Na(+) or K(+) across membranes. Plays important roles in the transport of Na(+) and K(+) accumulated in the cytoplasm into vacuoles, and is involved in salt stress tolerance. The protein is Sodium/hydrogen exchanger 1 of Oryza sativa subsp. japonica (Rice).